A 426-amino-acid polypeptide reads, in one-letter code: Selenocysteine lyase (426 aa).

N6-(pyridoxal phosphate)lysine is present on Lys-239. The active-site S-selanylcysteine intermediate is the Cys-367.

The protein belongs to the class-V pyridoxal-phosphate-dependent aminotransferase family. In terms of assembly, homodimer. Requires pyridoxal 5'-phosphate as cofactor.

Its subcellular location is the cytoplasm. The protein localises to the cytosol. It carries out the reaction L-selenocysteine + AH2 = hydrogenselenide + L-alanine + A + H(+). Functionally, catalyzes the decomposition of L-selenocysteine to L-alanine and elemental selenium. The protein is Selenocysteine lyase (scly) of Xenopus laevis (African clawed frog).